The sequence spans 313 residues: Homoserine O-succinyltransferase (313 aa).

The active-site Acyl-thioester intermediate is Cys142. Residues Lys163 and Ser192 each coordinate substrate. His235 functions as the Proton acceptor in the catalytic mechanism. Glu237 is an active-site residue. Arg249 provides a ligand contact to substrate.

The protein belongs to the MetA family.

Its subcellular location is the cytoplasm. It carries out the reaction L-homoserine + succinyl-CoA = O-succinyl-L-homoserine + CoA. It participates in amino-acid biosynthesis; L-methionine biosynthesis via de novo pathway; O-succinyl-L-homoserine from L-homoserine: step 1/1. Its function is as follows. Transfers a succinyl group from succinyl-CoA to L-homoserine, forming succinyl-L-homoserine. The sequence is that of Homoserine O-succinyltransferase from Shewanella baltica (strain OS223).